An 821-amino-acid chain; its full sequence is Calpain-3 (821 aa).

Residues 7 to 37 (ASVAPRTAAEPRSPGPVPHPAQSKATEAGGG) form a disordered region. Positions 74–417 (LYVDPEFPPD…FTKLEICNLT (344 aa)) constitute a Calpain catalytic domain. Active-site residues include Cys129, His334, and Asn358. Residues 418-586 (ADALQSDKLQ…KRNLSEEVEN (169 aa)) are domain III. The linker stretch occupies residues 587 to 649 (TISVDRPVKK…QPGSSDQESE (63 aa)). Residues 609 to 652 (ANSNKELGVDQESEEGKGKTSPDKQKQSPQPQPGSSDQESEEQQ) are disordered. Over residues 622-634 (EEGKGKTSPDKQK) the composition is skewed to basic and acidic residues. A compositionally biased stretch (low complexity) spans 635-645 (QSPQPQPGSSD). EF-hand domains lie at 649-683 (EEQQ…VVNK), 692-725 (FTLE…NKIK), 722-757 (NKIK…AGFH), and 787-821 (VRLE…TMYA). Positions 650-821 (EQQQFRNIFK…LEWLQLTMYA (172 aa)) are domain IV. Residues Ala662, Asp665, Glu667, Glu672, Asp705, Asp707, Ser709, Lys711, Glu716, Asp735, Asp737, Ser739, Thr741, Glu746, Asp800, Asp802, Asp804, and Ile806 each contribute to the Ca(2+) site.

Belongs to the peptidase C2 family. In terms of assembly, homodimer; via EF-hand domain 4. Interacts with TTN/titin. Interacts with CMYA5; this interaction, which results in CMYA5 proteolysis, may protect CAPN3 from autolysis. Interacts with SIMC1. Interacts with UTP25; the interaction is required for CAPN3 translocation to the nucleolus. Isoform I is skeletal muscle specific.

The protein resides in the cytoplasm. Its subcellular location is the nucleus. The protein localises to the nucleolus. The enzyme catalyses Broad endopeptidase activity.. Activated by micromolar concentrations of calcium and inhibited by calpastatin. In terms of biological role, calcium-regulated non-lysosomal thiol-protease. Proteolytically cleaves CTBP1 at 'His-409'. Mediates, with UTP25, the proteasome-independent degradation of p53/TP53. The chain is Calpain-3 from Homo sapiens (Human).